The sequence spans 347 residues: UDP-N-acetylenolpyruvoylglucosamine reductase (347 aa).

The FAD-binding PCMH-type domain occupies 16-187; that stretch reads AIEQCSHYLV…IAVGLKLPKT (172 aa). Arg163 is an active-site residue. Catalysis depends on Ser233, which acts as the Proton donor. Residue Glu328 is part of the active site.

This sequence belongs to the MurB family. Requires FAD as cofactor.

The protein resides in the cytoplasm. The enzyme catalyses UDP-N-acetyl-alpha-D-muramate + NADP(+) = UDP-N-acetyl-3-O-(1-carboxyvinyl)-alpha-D-glucosamine + NADPH + H(+). Its pathway is cell wall biogenesis; peptidoglycan biosynthesis. Cell wall formation. The sequence is that of UDP-N-acetylenolpyruvoylglucosamine reductase from Vibrio vulnificus (strain CMCP6).